Here is a 124-residue protein sequence, read N- to C-terminus: Putative B3 domain-containing protein At1g51970 (124 aa).

Positions 18–124 (VLKKNLTESD…SRRFLFHHIN (107 aa)) form a DNA-binding region, TF-B3.

It localises to the nucleus. The polypeptide is Putative B3 domain-containing protein At1g51970 (Arabidopsis thaliana (Mouse-ear cress)).